Here is a 1976-residue protein sequence, read N- to C-terminus: Myosin-10 (1976 aa).

Arginine 18 is subject to Omega-N-methylarginine. In terms of domain architecture, Myosin N-terminal SH3-like spans 31 to 81 (TAKKLVWIPSERHGFEAASIKEERGDEVMVELAENGKKAMVNKDDIQKMNP). Residues 85–783 (SKVEDMAELT…VLAHLEEERD (699 aa)) form the Myosin motor domain. 178 to 185 (GESGAGKT) contacts ATP. Lysine 442 carries the post-translational modification N6-acetyllysine. The tract at residues 661-683 (LTKLMATLRNTNPNFVRCIIPNH) is actin-binding. The IQ domain occupies 786 to 815 (ITDIIIFFQAVCRGYLARKAFAKKQQQLSA). Residues 845–1976 (LQVTRQEEEL…VNETQPPQSE (1132 aa)) adopt a coiled-coil conformation. The tract at residues 1125–1175 (EDFESEKASRNKAEKQKRDLSEELEALKTELEDTLDTTAAQQELRTKREQE) is disordered. Basic and acidic residues predominate over residues 1129–1155 (SEKASRNKAEKQKRDLSEELEALKTEL). Phosphoserine is present on serine 1145. Residues lysine 1241, lysine 1301, and lysine 1645 each carry the N6-acetyllysine modification. Disordered stretches follow at residues 1697–1718 (ASSE…DEIA) and 1874–1976 (KANA…PQSE). The segment covering 1698–1708 (SSERARRHAEQ) has biased composition (basic and acidic residues). Position 1930 is an omega-N-methylarginine (arginine 1930). Phosphoserine is present on residues serine 1935, serine 1937, serine 1938, and serine 1939. Omega-N-methylarginine is present on arginine 1940. Phosphoserine is present on residues serine 1952 and serine 1956. Threonine 1960 bears the Phosphothreonine mark. The span at 1967–1976 (VNETQPPQSE) shows a compositional bias: polar residues. Serine 1975 bears the Phosphoserine mark.

Belongs to the TRAFAC class myosin-kinesin ATPase superfamily. Myosin family. Myosin is a hexameric protein that consists of 2 heavy chain subunits (MHC), 2 alkali light chain subunits (MLC) and 2 regulatory light chain subunits (MLC-2). Interacts with PLEKHG6. Interacts with ECPAS. Interacts with KIF26B. Interacts with LARP6. Interacts with MCC. Interacts with CFAP95. Post-translationally, phosphorylated by ABL2.

It is found in the cell projection. The protein resides in the lamellipodium. Functionally, involved with LARP6 in the stabilization of type I collagen mRNAs for CO1A1 and CO1A2. During cell spreading, plays an important role in cytoskeleton reorganization, focal contacts formation (in the central part but not the margins of spreading cells), and lamellipodial extension; this function is mechanically antagonized by MYH9. Cellular myosin that appears to play a role in cytokinesis, cell shape, and specialized functions such as secretion and capping. This is Myosin-10 (Myh10) from Rattus norvegicus (Rat).